Consider the following 320-residue polypeptide: Meso-diaminopimelate D-dehydrogenase (320 aa).

Residues 11–14, 35–37, 65–68, 88–90, and 117–121 contribute to the NADP(+) site; these read YGNL, SRR, CMGS, TYD, and TGWDP. Residues Asp-90, Asp-120, Trp-144, 150–151, Thr-169, Arg-195, His-244, and Asn-270 contribute to the substrate site; that span reads QG.

Homodimer.

The catalysed reaction is meso-2,6-diaminopimelate + NADP(+) + H2O = (S)-2-amino-6-oxoheptanedioate + NH4(+) + NADPH + H(+). It functions in the pathway amino-acid biosynthesis; L-lysine biosynthesis via DAP pathway; DL-2,6-diaminopimelate from (S)-tetrahydrodipicolinate: step 1/1. L,L-2,6-diaminopimelate and D,D-2,6-diaminopimelate competitively inhibit the oxidative deamination of meso-2,6-diaminopimelate. The enzyme is also inhibited by L-cysteine, and by p-chloromercuribenzoate, iodoacetic acid and HgCl(2) in vitro. Functionally, catalyzes the reversible NADPH-dependent reductive amination of L-2-amino-6-oxopimelate, the acyclic form of L-tetrahydrodipicolinate, to generate the meso compound, D,L-2,6-diaminopimelate. Probably plays a role in lysine biosynthesis. Exhibits a high substrate specificity for meso-2,6-diaminopimelate, since L,L-2,6-diaminopimelate, D,D-2,6-diaminopimelate, L-glutamate, L-alanine, L-leucine, L-valine, L-aspartate, L-threonine, L-homoserine, L-methionine, L-lysine, L-serine, L-phenylalanine, L-tyrosine, L-tryptophan, L-ornithine, L-histidine, L-arginine, D-glutamate, and D-alanine are not substrates for the oxidative deamination reaction. Can use NAD(+) only poorly since the activity observed in the presence of NAD(+) is about 3% of that with NADP(+). The sequence is that of Meso-diaminopimelate D-dehydrogenase (ddh) from Corynebacterium glutamicum (strain ATCC 13032 / DSM 20300 / JCM 1318 / BCRC 11384 / CCUG 27702 / LMG 3730 / NBRC 12168 / NCIMB 10025 / NRRL B-2784 / 534).